We begin with the raw amino-acid sequence, 131 residues long: MVTLLTSPSCTSCRKAKAWLEEHDIPFEERNIFASPLSVEEVKQVVRMTEDGTDEIISTRSKVFQELDVELESLPLQKLFTIISDNPGLLRRPIIFDEKRLQVGYNDAEIRRFLPRKVRTFQLQEAQRLVN.

C10 and C13 form a disulfide bridge.

It belongs to the ArsC family. Spx subfamily. Interacts with the C-terminal domain of the alpha subunit of the RNAP.

It is found in the cytoplasm. In terms of biological role, global transcriptional regulator that plays a key role in stress response and exerts either positive or negative regulation of genes. Acts by interacting with the C-terminal domain of the alpha subunit of the RNA polymerase (RNAP). This interaction can enhance binding of RNAP to the promoter region of target genes and stimulate their transcription, or block interaction of RNAP with activator. The protein is Global transcriptional regulator Spx of Shouchella clausii (strain KSM-K16) (Alkalihalobacillus clausii).